A 239-amino-acid polypeptide reads, in one-letter code: Ribonuclease 3 (239 aa).

In terms of domain architecture, RNase III spans 11 to 133 (HTAIQKKLGY…MFAAVSFDAD (123 aa)). Position 46 (Glu46) interacts with Mg(2+). Residue Asp50 is part of the active site. Residues Asp119 and Glu122 each coordinate Mg(2+). The active site involves Glu122. Residues 160 to 230 (DGKTALQEAL…AKEALKWLEE (71 aa)) form the DRBM domain.

The protein belongs to the ribonuclease III family. In terms of assembly, homodimer. Mg(2+) is required as a cofactor.

Its subcellular location is the cytoplasm. The enzyme catalyses Endonucleolytic cleavage to 5'-phosphomonoester.. Functionally, digests double-stranded RNA. Involved in the processing of primary rRNA transcript to yield the immediate precursors to the large and small rRNAs (23S and 16S). Processes some mRNAs, and tRNAs when they are encoded in the rRNA operon. Processes pre-crRNA and tracrRNA of type II CRISPR loci if present in the organism. The sequence is that of Ribonuclease 3 from Neisseria gonorrhoeae (strain ATCC 700825 / FA 1090).